A 71-amino-acid chain; its full sequence is uncharacterized protein (71 aa).

Over residues 20–32 (SSGRRQLTATQPR) the composition is skewed to polar residues. A disordered region spans residues 20-46 (SSGRRQLTATQPRSDPESQRGRTSSNR).

This is an uncharacterized protein from Rhizobium leguminosarum.